Here is a 274-residue protein sequence, read N- to C-terminus: 3-methyl-2-oxobutanoate hydroxymethyltransferase (274 aa).

2 residues coordinate Mg(2+): Asp46 and Asp85. 3-methyl-2-oxobutanoate contacts are provided by residues 46 to 47 (DS), Asp85, and Lys115. Position 117 (Glu117) interacts with Mg(2+). Glu184 acts as the Proton acceptor in catalysis.

Belongs to the PanB family. As to quaternary structure, homodecamer; pentamer of dimers. The cofactor is Mg(2+).

It localises to the cytoplasm. It carries out the reaction 3-methyl-2-oxobutanoate + (6R)-5,10-methylene-5,6,7,8-tetrahydrofolate + H2O = 2-dehydropantoate + (6S)-5,6,7,8-tetrahydrofolate. The protein operates within cofactor biosynthesis; coenzyme A biosynthesis. In terms of biological role, catalyzes the reversible reaction in which hydroxymethyl group from 5,10-methylenetetrahydrofolate is transferred onto alpha-ketoisovalerate to form ketopantoate. The chain is 3-methyl-2-oxobutanoate hydroxymethyltransferase from Halobacterium salinarum (strain ATCC 29341 / DSM 671 / R1).